Consider the following 167-residue polypeptide: Phosphorelay intermediate protein YPD1 (167 aa).

The HPt domain occupies 24 to 129 (DSDFSKGLII…DDEEIKIQVD (106 aa)). Histidine 64 is subject to Phosphohistidine.

The protein belongs to the YPD1 family. Interacts with the response regulatory domains of SLN1 and SSK1. In terms of processing, the phosphorelay mechanism involves the sequential transfer of a phosphate group from 'His-576' (H1) to 'Asp-1144' (D1) of SLN1, then to His-64 (H2) of YPD1 and finally to 'Asp-554' (D2) of SSK1 or 'Asp-427' (D2) of SKN7.

It localises to the cytoplasm. It is found in the nucleus. In terms of biological role, phosphorelay intermediate protein that is part of the branched SLN1-YPD1-SKN7/SSK1 two-component regulatory system, which controls activity of the HOG1 pathway and gene expression in response to changes in the osmolarity of the extracellular environment. Catalyzes the phosphoryl group transfer from the membrane-bound osmosensing histidine kinase SLN1 to two distinct response regulator proteins, SSK1 in the cytoplasm, and transcription factor SKN7 in the nucleus. This Saccharomyces cerevisiae (strain ATCC 204508 / S288c) (Baker's yeast) protein is Phosphorelay intermediate protein YPD1 (YPD1).